We begin with the raw amino-acid sequence, 313 residues long: Tyrosine--tRNA ligase (313 aa).

Tyrosine 32 contributes to the L-tyrosine binding site. The 'HIGH' region signature appears at 37–45 (PSGEIHLGH). L-tyrosine contacts are provided by tyrosine 152, glutamine 156, aspartate 159, and glutamine 174. The short motif at 208–212 (KMSSS) is the 'KMSKS' region element. An ATP-binding site is contributed by serine 211.

Belongs to the class-I aminoacyl-tRNA synthetase family. TyrS type 3 subfamily. Homodimer.

The protein resides in the cytoplasm. It carries out the reaction tRNA(Tyr) + L-tyrosine + ATP = L-tyrosyl-tRNA(Tyr) + AMP + diphosphate + H(+). Catalyzes the attachment of tyrosine to tRNA(Tyr) in a two-step reaction: tyrosine is first activated by ATP to form Tyr-AMP and then transferred to the acceptor end of tRNA(Tyr). This chain is Tyrosine--tRNA ligase, found in Methanospirillum hungatei JF-1 (strain ATCC 27890 / DSM 864 / NBRC 100397 / JF-1).